Consider the following 488-residue polypeptide: Probable malate:quinone oxidoreductase (488 aa).

Belongs to the MQO family. FAD is required as a cofactor.

The enzyme catalyses (S)-malate + a quinone = a quinol + oxaloacetate. The protein operates within carbohydrate metabolism; tricarboxylic acid cycle; oxaloacetate from (S)-malate (quinone route): step 1/1. The protein is Probable malate:quinone oxidoreductase of Neisseria gonorrhoeae (strain ATCC 700825 / FA 1090).